A 175-amino-acid chain; its full sequence is MVFLPDNILILGHGGFGFNTNVFETNIINLAAVVGIVVSFVGKNLSSLLEDRKNTIVKNLEEANQRAIEAEQKLTAARTQLETAKKKAQEIREEGVLRATQEINNVVSQHELRLARLQEFKQETLAFYQQKAFKQAYLYVINKIMTRVRERLNKGLDSTYHVVVNNFYVSRFTQF.

A helical transmembrane segment spans residues 22–42; that stretch reads VFETNIINLAAVVGIVVSFVG.

This sequence belongs to the ATPase B chain family. F-type ATPases have 2 components, F(1) - the catalytic core - and F(0) - the membrane proton channel. F(1) has five subunits: alpha(3), beta(3), gamma(1), delta(1), epsilon(1). F(0) has four main subunits: a(1), b(1), b'(1) and c(10-14). The alpha and beta chains form an alternating ring which encloses part of the gamma chain. F(1) is attached to F(0) by a central stalk formed by the gamma and epsilon chains, while a peripheral stalk is formed by the delta, b and b' chains.

It is found in the plastid. Its subcellular location is the chloroplast thylakoid membrane. In terms of biological role, f(1)F(0) ATP synthase produces ATP from ADP in the presence of a proton or sodium gradient. F-type ATPases consist of two structural domains, F(1) containing the extramembraneous catalytic core and F(0) containing the membrane proton channel, linked together by a central stalk and a peripheral stalk. During catalysis, ATP synthesis in the catalytic domain of F(1) is coupled via a rotary mechanism of the central stalk subunits to proton translocation. Component of the F(0) channel, it forms part of the peripheral stalk, linking F(1) to F(0). The protein is ATP synthase subunit b, chloroplastic of Chlamydomonas reinhardtii (Chlamydomonas smithii).